Here is a 328-residue protein sequence, read N- to C-terminus: NAD(P)H-dependent pentose reductase (328 aa).

Residue tyrosine 50 is the Proton donor of the active site. Histidine 112 contacts substrate. NAD(+) contacts are provided by residues 174 to 175, 223 to 232, and 279 to 289; these read AN, SSFGPQSFVE, and KSNNVDRLKQN.

The protein belongs to the aldo/keto reductase family.

In terms of biological role, pentose reductase with a broad substrate affinity involved in pentose catabolism. Has highest reductase activities with L-arabinose and D-xylose as substrates, and displays much lower activities with D-ribose, D-galactose and D-glucose. Has highest dehydrogenase activity with L-arabitol as substrate, followed by xylitol and D-sorbitol. May be responsible for the first step of the L-arabinose catabolic pathway. This Pyricularia oryzae (strain 70-15 / ATCC MYA-4617 / FGSC 8958) (Rice blast fungus) protein is NAD(P)H-dependent pentose reductase (PRD1).